The primary structure comprises 141 residues: Cystatin (141 aa).

The N-terminal stretch at M1 to M26 is a signal peptide. The region spanning G29–W129 is the Cystatin domain. The short motif at Q73–G77 is the Secondary area of contact element. 2 disulfide bridges follow: C91/C107 and C120/C140.

It belongs to the cystatin family. In terms of tissue distribution, expressed at a low level by the venom gland (at protein level).

Its subcellular location is the secreted. In terms of biological role, inhibits various C1 cysteine proteases including cathepsin L, papain and cathepsin B. This protein has no toxic activity and its function in the venom is unknown. It may play a role as a housekeeping or regulatory protein. The sequence is that of Cystatin from Notechis scutatus scutatus (Mainland tiger snake).